A 163-amino-acid chain; its full sequence is Shikimate kinase (163 aa).

10 to 15 (GVGKTT) is a binding site for ATP. T14 contacts Mg(2+). Residues D28, R52, and G75 each coordinate substrate. R116 lines the ATP pocket. R134 is a binding site for substrate.

The protein belongs to the shikimate kinase family. In terms of assembly, monomer. It depends on Mg(2+) as a cofactor.

It is found in the cytoplasm. It carries out the reaction shikimate + ATP = 3-phosphoshikimate + ADP + H(+). It participates in metabolic intermediate biosynthesis; chorismate biosynthesis; chorismate from D-erythrose 4-phosphate and phosphoenolpyruvate: step 5/7. Functionally, catalyzes the specific phosphorylation of the 3-hydroxyl group of shikimic acid using ATP as a cosubstrate. This chain is Shikimate kinase, found in Streptococcus suis (strain 98HAH33).